The following is a 185-amino-acid chain: Ribosome-recycling factor (185 aa).

This sequence belongs to the RRF family.

The protein localises to the cytoplasm. Responsible for the release of ribosomes from messenger RNA at the termination of protein biosynthesis. May increase the efficiency of translation by recycling ribosomes from one round of translation to another. In Streptococcus pyogenes serotype M28 (strain MGAS6180), this protein is Ribosome-recycling factor.